The sequence spans 233 residues: Preflagellin peptidase (233 aa).

Residue M1 is a topological domain, cytoplasmic. The helical transmembrane segment at 2–18 (IAYAIGLLGLLIASIQD) threads the bilayer. The Extracellular portion of the chain corresponds to 19 to 23 (IKSRE). Residues 24–46 (IENYIWIGMAVIGLLLSTYLSFT) traverse the membrane as a helical segment. At 47–49 (TGN) the chain is on the cytoplasmic side. Residues 50 to 72 (FMPIISSISGFIICFIIGYLMFV) traverse the membrane as a helical segment. Residues 73-78 (LGIGGA) lie on the Extracellular side of the membrane. A helical membrane pass occupies residues 79-89 (DGKILMGMGAL). Residues 90–110 (IPSYAFPVYSSLQPLYTMEYI) lie on the Cytoplasmic side of the membrane. The chain crosses the membrane as a helical span at residues 111–139 (PWFPLLVFFNGVILMIVLPIYLFFKNLSN). At 140–207 (GVKPKKLKEY…QYVWATPELP (68 aa)) the chain is on the extracellular side. The helical transmembrane segment at 208–219 (LLVPIALSYIIT) threads the bilayer. Residues 220–233 (PFLGDKILSIILPM) lie on the Cytoplasmic side of the membrane.

This sequence belongs to the peptidase A24 family. Archaeal preflagellin peptidase subfamily.

It localises to the cell membrane. It catalyses the reaction Cleaves the signal peptide of 3 to 12 amino acids from the N-terminal of preflagellin, usually at Arg-Gly-|- or Lys-Gly-|-, to release flagellin.. Cleaves the N-terminal leader peptide from preflagellins. The processing of preflagellins is necessary for assembly of flagellins into a flagellum structure. In Methanococcus voltae, this protein is Preflagellin peptidase (flaK).